Here is a 219-residue protein sequence, read N- to C-terminus: ADP-sugar pyrophosphatase (219 aa).

The residue at position 1 (M1) is an N-acetylmethionine. Residues S3 and S10 each carry the phosphoserine modification. W28 serves as a coordination point for substrate. Residue K42 forms a Glycyl lysine isopeptide (Lys-Gly) (interchain with G-Cter in SUMO2) linkage. A Phosphothreonine modification is found at T45. Substrate is bound by residues 46–47 and R51; that span reads WE. One can recognise a Nudix hydrolase domain in the interval 57 to 197; it reads QTADGVAVIP…EEHLTVDARV (141 aa). Y74 carries the post-translational modification Phosphotyrosine. R84 is a binding site for substrate. Residue A96 coordinates Mg(2+). Residues 97–118 carry the Nudix box motif; the sequence is GLIDDGETPEAAALRELEEETG. L98 provides a ligand contact to substrate. Mg(2+) is bound by residues E112 and E116. D133 provides a ligand contact to substrate. E166 is a binding site for Mg(2+). 2 positions are modified to N6-acetyllysine: K210 and K218.

It belongs to the Nudix hydrolase family. Homodimer. Interacts with PARG. Mg(2+) serves as cofactor. Post-translationally, phosphorylation at Thr-45 is required for homodimer stability; dephosphorylation results in destabilization of the homodimer. Dephosphorylation at Thr-45 promotes the ATP-synthesis activity. In terms of tissue distribution, widely expressed. Most abundant in liver.

The protein localises to the nucleus. It catalyses the reaction D-ribose 5-phosphate + ATP + H(+) = ADP-D-ribose + diphosphate. The catalysed reaction is ADP-D-ribose + H2O = D-ribose 5-phosphate + AMP + 2 H(+). It carries out the reaction 8-oxo-dGDP + H2O = 8-oxo-dGMP + phosphate + H(+). Enzyme that can either act as an ADP-sugar pyrophosphatase in absence of diphosphate or catalyze the synthesis of ATP in presence of diphosphate. In absence of diphosphate, hydrolyzes with similar activities various modified nucleoside diphosphates such as ADP-ribose, ADP-mannose, ADP-glucose, 8-oxo-GDP and 8-oxo-dGDP. Can also hydrolyze other nucleotide sugars with low activity. In presence of diphosphate, mediates the synthesis of ATP in the nucleus by catalyzing the conversion of ADP-ribose to ATP and ribose 5-phosphate. Nuclear ATP synthesis takes place when dephosphorylated at Thr-45. Nuclear ATP generation is required for extensive chromatin remodeling events that are energy-consuming. Does not play a role in U8 snoRNA decapping activity. Binds U8 snoRNA. This is ADP-sugar pyrophosphatase (NUDT5) from Homo sapiens (Human).